The chain runs to 512 residues: Glutathione-binding protein GsiB (512 aa).

The signal sequence occupies residues 1-26 (MARAVHRSGLVALGIATALMASCAFA).

This sequence belongs to the bacterial solute-binding protein 5 family. As to quaternary structure, the complex is composed of two ATP-binding proteins (GsiA), two transmembrane proteins (GsiC and GsiD) and a solute-binding protein (GsiB). In the presence of glutathione, interacts with the transmembrane proteins GsiC and GsiD.

The protein localises to the periplasm. Part of the ABC transporter complex GsiABCD involved in glutathione import. Binds glutathione. This Escherichia coli (strain K12) protein is Glutathione-binding protein GsiB.